We begin with the raw amino-acid sequence, 402 residues long: Flavohemoprotein (402 aa).

The region spanning 1–138 (MLSPEVRALV…LADLLIGRER (138 aa)) is the Globin domain. Position 85 (histidine 85) interacts with heme b. Catalysis depends on charge relay system residues tyrosine 95 and glutamate 137. The interval 149-402 (GGWTGWRAFK…AEVFGTGGVA (254 aa)) is reductase. Residues 152-261 (TGWRAFKVVR…SPPQGDFTLD (110 aa)) enclose the FAD-binding FR-type domain. FAD-binding positions include tyrosine 190 and 206–209 (RQYS). 274 to 279 (GVGLTP) contributes to the NADP(+) binding site. 395 to 398 (VFGT) is an FAD binding site.

Belongs to the globin family. Two-domain flavohemoproteins subfamily. This sequence in the C-terminal section; belongs to the flavoprotein pyridine nucleotide cytochrome reductase family. It depends on heme b as a cofactor. The cofactor is FAD.

The catalysed reaction is 2 nitric oxide + NADPH + 2 O2 = 2 nitrate + NADP(+) + H(+). It carries out the reaction 2 nitric oxide + NADH + 2 O2 = 2 nitrate + NAD(+) + H(+). In terms of biological role, is involved in NO detoxification in an aerobic process, termed nitric oxide dioxygenase (NOD) reaction that utilizes O(2) and NAD(P)H to convert NO to nitrate, which protects the bacterium from various noxious nitrogen compounds. Therefore, plays a central role in the inducible response to nitrosative stress. In Bordetella bronchiseptica (strain ATCC BAA-588 / NCTC 13252 / RB50) (Alcaligenes bronchisepticus), this protein is Flavohemoprotein.